We begin with the raw amino-acid sequence, 400 residues long: Phosphoglycerate kinase (400 aa).

Substrate contacts are provided by residues 21-23, R37, 60-63, R119, and R152; these read DFN and HFGR. Residues K205, G296, E327, and 353 to 356 each bind ATP; that span reads GGDT.

Belongs to the phosphoglycerate kinase family. As to quaternary structure, monomer.

The protein localises to the cytoplasm. The enzyme catalyses (2R)-3-phosphoglycerate + ATP = (2R)-3-phospho-glyceroyl phosphate + ADP. Its pathway is carbohydrate degradation; glycolysis; pyruvate from D-glyceraldehyde 3-phosphate: step 2/5. This is Phosphoglycerate kinase from Aliarcobacter butzleri (strain RM4018) (Arcobacter butzleri).